Here is a 312-residue protein sequence, read N- to C-terminus: tRNA dimethylallyltransferase (312 aa).

18 to 25 (GPTASGKS) is a binding site for ATP. 20-25 (TASGKS) contacts substrate. Interaction with substrate tRNA stretches follow at residues 43 to 46 (DSMQ) and 167 to 171 (QRILR).

Belongs to the IPP transferase family. Monomer. Mg(2+) is required as a cofactor.

It carries out the reaction adenosine(37) in tRNA + dimethylallyl diphosphate = N(6)-dimethylallyladenosine(37) in tRNA + diphosphate. Functionally, catalyzes the transfer of a dimethylallyl group onto the adenine at position 37 in tRNAs that read codons beginning with uridine, leading to the formation of N6-(dimethylallyl)adenosine (i(6)A). The sequence is that of tRNA dimethylallyltransferase from Azorhizobium caulinodans (strain ATCC 43989 / DSM 5975 / JCM 20966 / LMG 6465 / NBRC 14845 / NCIMB 13405 / ORS 571).